A 211-amino-acid chain; its full sequence is Ubiquitin-conjugating enzyme E2 S-C (211 aa).

Residues histidine 11–glutamine 157 form the UBC core domain. Cysteine 95 acts as the Glycyl thioester intermediate in catalysis. The disordered stretch occupies residues glycine 158–leucine 211. A compositionally biased stretch (basic residues) spans alanine 197–leucine 211.

Belongs to the ubiquitin-conjugating enzyme family.

It carries out the reaction S-ubiquitinyl-[E1 ubiquitin-activating enzyme]-L-cysteine + [E2 ubiquitin-conjugating enzyme]-L-cysteine = [E1 ubiquitin-activating enzyme]-L-cysteine + S-ubiquitinyl-[E2 ubiquitin-conjugating enzyme]-L-cysteine.. Its pathway is protein modification; protein ubiquitination. Functionally, catalyzes the covalent attachment of ubiquitin to other proteins. Acts as an essential factor of the anaphase promoting complex/cyclosome (APC/C), a cell cycle-regulated ubiquitin ligase that controls progression through mitosis. Acts by specifically elongating 'Lys-11'-linked polyubiquitin chains initiated by the E2 enzyme ube2c/ubch10 on APC/C substrates, enhancing the degradation of APC/C substrates by the proteasome and promoting mitotic exit. This is Ubiquitin-conjugating enzyme E2 S-C (ube2s-c) from Xenopus laevis (African clawed frog).